The chain runs to 263 residues: Probable 6-oxopurine nucleoside phosphorylase (263 aa).

Phosphate is bound by residues Thr-9, 49–50 (RH), and 82–83 (TA). A substrate-binding site is contributed by Met-181. Residue Thr-182 coordinates phosphate. 205–207 (NYA) contacts substrate.

The protein belongs to the PNP/MTAP phosphorylase family. MTAP subfamily. Homohexamer. Dimer of a homotrimer.

The enzyme catalyses a purine D-ribonucleoside + phosphate = a purine nucleobase + alpha-D-ribose 1-phosphate. The protein operates within purine metabolism; purine nucleoside salvage. In terms of biological role, purine nucleoside phosphorylase which is highly specific for 6-oxopurine nucleosides. Cleaves guanosine or inosine to respective bases and sugar-1-phosphate molecules. Involved in purine salvage. This is Probable 6-oxopurine nucleoside phosphorylase from Dictyoglomus turgidum (strain DSM 6724 / Z-1310).